Consider the following 125-residue polypeptide: Large ribosomal subunit protein bL12 (125 aa).

The protein belongs to the bacterial ribosomal protein bL12 family. Homodimer. Part of the ribosomal stalk of the 50S ribosomal subunit. Forms a multimeric L10(L12)X complex, where L10 forms an elongated spine to which 2 to 4 L12 dimers bind in a sequential fashion. Binds GTP-bound translation factors.

In terms of biological role, forms part of the ribosomal stalk which helps the ribosome interact with GTP-bound translation factors. Is thus essential for accurate translation. The polypeptide is Large ribosomal subunit protein bL12 (Alkalilimnicola ehrlichii (strain ATCC BAA-1101 / DSM 17681 / MLHE-1)).